We begin with the raw amino-acid sequence, 94 residues long: Large ribosomal subunit protein bL25 (94 aa).

The protein belongs to the bacterial ribosomal protein bL25 family. Part of the 50S ribosomal subunit; part of the 5S rRNA/L5/L18/L25 subcomplex. Contacts the 5S rRNA. Binds to the 5S rRNA independently of L5 and L18.

Functionally, this is one of the proteins that binds to the 5S RNA in the ribosome where it forms part of the central protuberance. The protein is Large ribosomal subunit protein bL25 of Salmonella agona (strain SL483).